The following is a 366-amino-acid chain: MNKVVLLCRPGFEKECAAEITDKAGKREIFGFARVKENAGYVIYECYQPEDGEKLISELPFSSLIFARQWFVVGELLQHLPPEDRITPIVGMLQGVVEKGGELRVEVADTNESKELMKFCRKFTVPLRAALRDAGVLTNYETPKRPVVHVFFIAPGCCYTGYSLAHNNSPFYMGIPRLKFPSDAPSRSTLKLEEALHVFIPEDEWDERLANGMYAVDLGACPGGWTYQLVKRNMWVYSVDNGPMAQSLMDTGQVTWLREDGFRYRPNRNNISWMVCDMVEKPAKVTALMAQWLVNGWCRETIFNLKLPMKKRYEEVSHNLAYLQAQLDEHGVNAQIQARQLYHDREEVTVHVRRLWAAVGGRRDER.

S-adenosyl-L-methionine-binding positions include serine 188, 221–224 (CPGG), aspartate 240, aspartate 260, and aspartate 277. Lysine 306 functions as the Proton acceptor in the catalytic mechanism.

The protein belongs to the class I-like SAM-binding methyltransferase superfamily. RNA methyltransferase RlmE family. RlmM subfamily. In terms of assembly, monomer.

The protein resides in the cytoplasm. The enzyme catalyses cytidine(2498) in 23S rRNA + S-adenosyl-L-methionine = 2'-O-methylcytidine(2498) in 23S rRNA + S-adenosyl-L-homocysteine + H(+). Its function is as follows. Catalyzes the 2'-O-methylation at nucleotide C2498 in 23S rRNA. This Salmonella agona (strain SL483) protein is Ribosomal RNA large subunit methyltransferase M.